We begin with the raw amino-acid sequence, 568 residues long: Oxygen-dependent choline dehydrogenase (568 aa).

An FAD-binding site is contributed by 8–37; sequence DYIIIGAGSAGNTLAARLTEDAGVTVLLLE. The active-site Proton acceptor is the histidine 477.

This sequence belongs to the GMC oxidoreductase family. The cofactor is FAD.

It carries out the reaction choline + A = betaine aldehyde + AH2. The catalysed reaction is betaine aldehyde + NAD(+) + H2O = glycine betaine + NADH + 2 H(+). The protein operates within amine and polyamine biosynthesis; betaine biosynthesis via choline pathway; betaine aldehyde from choline (cytochrome c reductase route): step 1/1. Its function is as follows. Involved in the biosynthesis of the osmoprotectant glycine betaine. Catalyzes the oxidation of choline to betaine aldehyde and betaine aldehyde to glycine betaine at the same rate. The chain is Oxygen-dependent choline dehydrogenase from Pseudomonas syringae pv. tomato (strain ATCC BAA-871 / DC3000).